We begin with the raw amino-acid sequence, 366 residues long: UDP-N-acetylglucosamine--N-acetylmuramyl-(pentapeptide) pyrophosphoryl-undecaprenol N-acetylglucosamine transferase (366 aa).

Residues 14–16, Asn-125, Arg-168, Ser-196, and Gln-297 contribute to the UDP-N-acetyl-alpha-D-glucosamine site; that span reads TGG.

This sequence belongs to the glycosyltransferase 28 family. MurG subfamily.

It localises to the cell inner membrane. The enzyme catalyses di-trans,octa-cis-undecaprenyl diphospho-N-acetyl-alpha-D-muramoyl-L-alanyl-D-glutamyl-meso-2,6-diaminopimeloyl-D-alanyl-D-alanine + UDP-N-acetyl-alpha-D-glucosamine = di-trans,octa-cis-undecaprenyl diphospho-[N-acetyl-alpha-D-glucosaminyl-(1-&gt;4)]-N-acetyl-alpha-D-muramoyl-L-alanyl-D-glutamyl-meso-2,6-diaminopimeloyl-D-alanyl-D-alanine + UDP + H(+). It functions in the pathway cell wall biogenesis; peptidoglycan biosynthesis. Cell wall formation. Catalyzes the transfer of a GlcNAc subunit on undecaprenyl-pyrophosphoryl-MurNAc-pentapeptide (lipid intermediate I) to form undecaprenyl-pyrophosphoryl-MurNAc-(pentapeptide)GlcNAc (lipid intermediate II). In Bradyrhizobium diazoefficiens (strain JCM 10833 / BCRC 13528 / IAM 13628 / NBRC 14792 / USDA 110), this protein is UDP-N-acetylglucosamine--N-acetylmuramyl-(pentapeptide) pyrophosphoryl-undecaprenol N-acetylglucosamine transferase.